Reading from the N-terminus, the 462-residue chain is Phosphoglucosamine mutase (462 aa).

Ser-111 functions as the Phosphoserine intermediate in the catalytic mechanism. 4 residues coordinate Mg(2+): Ser-111, Asp-250, Asp-252, and Asp-254. The residue at position 111 (Ser-111) is a Phosphoserine.

The protein belongs to the phosphohexose mutase family. Mg(2+) is required as a cofactor. Post-translationally, activated by phosphorylation.

It carries out the reaction alpha-D-glucosamine 1-phosphate = D-glucosamine 6-phosphate. Catalyzes the conversion of glucosamine-6-phosphate to glucosamine-1-phosphate. In Synechococcus sp. (strain WH7803), this protein is Phosphoglucosamine mutase.